The chain runs to 132 residues: Fluoride-specific ion channel FluC 2 (132 aa).

A run of 4 helical transmembrane segments spans residues 12–32 (LTEL…RWQL), 41–61 (LLVN…PVAP), 65–85 (LLVG…MLAA), and 96–116 (AALG…ALGF). Positions 73 and 76 each coordinate Na(+).

Belongs to the fluoride channel Fluc/FEX (TC 1.A.43) family.

It is found in the cell inner membrane. It carries out the reaction fluoride(in) = fluoride(out). Its activity is regulated as follows. Na(+) is not transported, but it plays an essential structural role and its presence is essential for fluoride channel function. Its function is as follows. Fluoride-specific ion channel. Important for reducing fluoride concentration in the cell, thus reducing its toxicity. This is Fluoride-specific ion channel FluC 2 from Parasynechococcus marenigrum (strain WH8102).